Reading from the N-terminus, the 24-residue chain is Conotoxin PIVF (24 aa).

3 cysteine pairs are disulfide-bonded: Cys-2/Cys-10, Cys-3/Cys-15, and Cys-13/Cys-19. Lys-24 carries the post-translational modification Lysine amide.

This sequence belongs to the conotoxin A superfamily. Expressed by the venom duct.

It localises to the secreted. Functionally, probable neurotoxin with ion channel inhibitor activity. In vivo, elicits dose-dependently excitatory activity upon injection into fish. Its action is slowly reversible. This Conus purpurascens (Purple cone) protein is Conotoxin PIVF.